The primary structure comprises 1909 residues: Plexin-B3 (1909 aa).

Residues 1–44 (MCHAAQETPLLHHFMAPVMARWPPFGLCLLLLLLSPPPLPLTGA) form the signal peptide. The 427-residue stretch at 45–471 (HRFSAPNTTL…TAHQVDRIPV (427 aa)) folds into the Sema domain. Residues 45 to 1255 (HRFSAPNTTL…PLSAFPVEAQ (1211 aa)) are Extracellular-facing. Asn-51 carries N-linked (GlcNAc...) asparagine glycosylation. Disulfide bonds link Cys-98-Cys-107 and Cys-132-Cys-140. Asn-231 carries an N-linked (GlcNAc...) asparagine glycan. 8 cysteine pairs are disulfide-bonded: Cys-267–Cys-370, Cys-283–Cys-315, Cys-333–Cys-357, Cys-474–Cys-491, Cys-480–Cys-525, Cys-483–Cys-500, Cys-494–Cys-506, and Cys-562–Cys-580. In terms of domain architecture, PSI 1 spans 473–526 (ACPQFPDCASCLQAQDPLCGWCVLQGRCTRKGQCGRAGQLNQWLWSYEEDSHCL). Asn-615 is a glycosylation site (N-linked (GlcNAc...) asparagine). 2 consecutive PSI domains span residues 620 to 682 (DCSA…GACP) and 787 to 833 (DCAM…LLCP). N-linked (GlcNAc...) asparagine glycosylation is found at Asn-802, Asn-900, Asn-957, Asn-1101, and Asn-1218. IPT/TIG domains follow at residues 835–925 (PSID…FTYQ), 927–1012 (PVLL…FRYT), 1015–1145 (PQLV…FLYQ), and 1159–1244 (ARPY…YEAE). The chain crosses the membrane as a helical span at residues 1256-1276 (AGVGMGAAVLIAAVLLLTLMY). Residues 1277-1909 (RHKSKQALRD…ALVENKVTDL (633 aa)) are Cytoplasmic-facing.

This sequence belongs to the plexin family. As to quaternary structure, interacts (via cytoplasmic domain) with RAC1 and ARHGDIA. Binds MET and MST1R. Interacts (via cytoplasmic domain) with FSCN1. Interacts with RIT2/RIN. May form homodimers (via Sema domain). As to expression, expression detected in Purkinje and granular cells in cerebellum, and in brain neocortex but not in corpus callosum. Expressed in glioma cells and embryonic kidney cells (at protein level). Expressed in brain, liver, pancreas and placenta, with weak expression detected also in lung and kidney. Expressed in several glioma cell lines.

It localises to the cell membrane. Functionally, receptor for SEMA5A that plays a role in axon guidance, invasive growth and cell migration. Stimulates neurite outgrowth and mediates Ca(2+)/Mg(2+)-dependent cell aggregation. In glioma cells, SEMA5A stimulation of PLXNB3 results in the disassembly of F-actin stress fibers, disruption of focal adhesions and cellular collapse as well as inhibition of cell migration and invasion through ARHGDIA-mediated inactivation of RAC1. The polypeptide is Plexin-B3 (PLXNB3) (Homo sapiens (Human)).